The primary structure comprises 542 residues: T-complex protein 1 subunit delta (542 aa).

Residues 1–16 (MPENVAPRTGPPAGAA) are compositionally biased toward low complexity. Residues 1 to 31 (MPENVAPRTGPPAGAAGAAGGRGKSAYQDRD) are disordered. Omega-N-methylarginine is present on Arg-22. The residue at position 24 (Lys-24) is an N6-acetyllysine. Position 39 is a phosphoserine (Ser-39). An ADP-binding site is contributed by Gly-56. Gly-56 serves as a coordination point for ATP. Residue Asp-107 coordinates Mg(2+). ADP-binding residues include Gly-108, Thr-109, Thr-110, Ser-111, Asn-175, Ser-176, and Lys-177. Residues Gly-108 and Thr-109 each coordinate ATP. Residue Lys-177 coordinates ATP. Phosphoserine is present on residues Ser-187 and Ser-205. Residues Lys-291, Lys-305, Lys-322, and Lys-329 each carry the N6-acetyllysine modification. Position 428 (Gly-428) interacts with ADP. Ser-447 carries the post-translational modification Phosphoserine. ADP is bound at residue Gln-513.

The protein belongs to the TCP-1 chaperonin family. As to quaternary structure, component of the chaperonin-containing T-complex (TRiC), a hexadecamer composed of two identical back-to-back stacked rings enclosing a protein folding chamber. Each ring is made up of eight different subunits: TCP1/CCT1, CCT2, CCT3, CCT4, CCT5, CCT6A/CCT6, CCT7, CCT8. Interacts with PACRG. Interacts with DNAAF4. Interacts with DLEC1.

It localises to the cytoplasm. The protein localises to the melanosome. The protein resides in the cytoskeleton. It is found in the microtubule organizing center. Its subcellular location is the centrosome. It localises to the cilium basal body. The enzyme catalyses ATP + H2O = ADP + phosphate + H(+). In terms of biological role, component of the chaperonin-containing T-complex (TRiC), a molecular chaperone complex that assists the folding of actin, tubulin and other proteins upon ATP hydrolysis. The TRiC complex mediates the folding of WRAP53/TCAB1, thereby regulating telomere maintenance. As part of the TRiC complex may play a role in the assembly of BBSome, a complex involved in ciliogenesis regulating transports vesicles to the cilia. The chain is T-complex protein 1 subunit delta (CCT4) from Bos taurus (Bovine).